A 905-amino-acid polypeptide reads, in one-letter code: Dopamine D2-like receptor (905 aa).

Residues Met1 to Gln23 form a disordered region. Topologically, residues Met1–Tyr377 are extracellular. Asn88, Asn146, Asn156, Asn166, Asn174, Asn257, Asn314, and Asn343 each carry an N-linked (GlcNAc...) asparagine glycan. A helical transmembrane segment spans residues Trp378–Leu398. Topologically, residues Ser399–Ser416 are cytoplasmic. A helical membrane pass occupies residues Leu417–Val437. Residues Asn438–Phe450 lie on the Extracellular side of the membrane. Cys448 and Cys525 are joined by a disulfide. Residues Tyr451–Ile471 traverse the membrane as a helical segment. Residues Asp472 to Cys493 are Cytoplasmic-facing. A helical membrane pass occupies residues Leu494–Leu514. Residues Asn515 to Asp531 lie on the Extracellular side of the membrane. Residues Phe532–Tyr552 form a helical membrane-spanning segment. Residues Trp553–Thr830 are Cytoplasmic-facing. Disordered stretches follow at residues Ser600–Asp631, Ala702–Val753, and Asp780–Gln799. Residues Ala702 to Ala722 are compositionally biased toward low complexity. Over residues Thr723–Arg734 the composition is skewed to polar residues. The span at Pro735–Pro746 shows a compositional bias: basic and acidic residues. A helical transmembrane segment spans residues Leu831–Met851. The Extracellular portion of the chain corresponds to Asp852 to Tyr869. A helical transmembrane segment spans residues Met870 to Phe890. Residues Asn891–Gly905 lie on the Cytoplasmic side of the membrane.

This sequence belongs to the G-protein coupled receptor 1 family. Highest expression is in adult heads.

It is found in the cell membrane. Its function is as follows. Receptor for dopamine. The activity of this receptor is mediated by G proteins which inhibit adenylyl cyclase. In Drosophila melanogaster (Fruit fly), this protein is Dopamine D2-like receptor.